A 567-amino-acid chain; its full sequence is MVARRNKPKAPLVKHRFSGGDSHKPKPPPATKQPFSGVESHKPKTSPATKQKFSGVESHKPKTPPGKQRFSGAESRKPKTPPATKQKFSSLERSALYARREAANILRTVLRGDAERRAVASIKSLVLSPSVRNKRGTFALVCETLKYLTVIKDVLDIANVLNSKWKRQEPLVFIVCYDILFGKDTPSIGDAEKFLMRHKEALLSGLATLLVRKKVDSVDQLLGSKLTGHLKPRYVRVNTLKMDVDSAVQELEKHYTVQKDETVPDLLVLPPGSDLHAHRLVANGRIFLQGKASSMVAAALQPQAGWEVLDACSAPGNKTIHLAALMEGQGKIIACELNEERVKRLEHTIKLSGASNIEVCHGDFLGLNPKDPSFAKIRAILLDPSCSGSGTITDRLDHLLPSHSEDNNMNYDSMRLHKLAVFQKKALAHALSFPKVERVVYSTCSIYQIENEDVVSSVLPLASSLGFKLATPFPQWQRRGLPVFAGSEHLLRMDPVEDKEGFFIALFVRANKLDNPKSSELPDRVCRRRPKERTMQLHPYLCPKMFRAWSGTLHRLKTRFLLSRNGC.

Over residues 1–17 (MVARRNKPKAPLVKHRF) the composition is skewed to basic residues. A disordered region spans residues 1-88 (MVARRNKPKA…KTPPATKQKF (88 aa)). S-adenosyl-L-methionine is bound by residues 312-318 (CSAPGNK), glutamate 336, aspartate 363, and aspartate 383. Cysteine 444 functions as the Nucleophile in the catalytic mechanism.

It belongs to the class I-like SAM-binding methyltransferase superfamily. RsmB/NOP family.

The enzyme catalyses a cytidine in 25S rRNA + S-adenosyl-L-methionine = a 5-methylcytidine in 25S rRNA + S-adenosyl-L-homocysteine + H(+). In terms of biological role, S-adenosyl-L-methionine-dependent methyltransferase that specifically methylates the C(5) position of cytosine 2268 (m5C2268) in 25S rRNA. The polypeptide is 25S rRNA (cytosine-C(5))-methyltransferase NSUN5 (Arabidopsis thaliana (Mouse-ear cress)).